Reading from the N-terminus, the 678-residue chain is Probable antibacterial peptide polyprotein (678 aa).

Tandem repeats lie at residues 1–67, 68–114, 115–161, 162–208, 209–255, 256–302, 303–349, 350–396, 397–443, 444–490, 491–537, 538–584, 585–631, and 632–678. A 14 X approximate tandem repeats region spans residues 1-678; that stretch reads MRSPRVIHLA…SEGVVLPEVR (678 aa). A glycan (O-linked (GalNAc...) threonine) is linked at T32. Disordered stretches follow at residues 58 to 97 and 113 to 678; these read SEAELLPEVRERRSPVDKGGYLPRPTPPRPVYRSRRDASL and VRER…PEVR. Basic and acidic residues predominate over residues 64 to 73; it reads PEVRERRSPV. O-linked (GalNAc...) threonine glycans are attached at residues T83 and T130. The span at 145–157 shows a compositional bias: low complexity; sequence ESELSPLSEAEVL. Positions 158 to 167 are enriched in basic and acidic residues; sequence PEVRERRSPV. An O-linked (GalNAc...) threonine glycan is attached at T177. Low complexity predominate over residues 188–204; it reads VASLESELSPLSEAEVL. Residues 205-214 are compositionally biased toward basic and acidic residues; the sequence is PEVRERRSPV. 2 O-linked (GalNAc...) threonine glycosylation sites follow: T224 and T271. Over residues 299–308 the composition is skewed to basic and acidic residues; it reads PEVRERRSPV. An O-linked (GalNAc...) threonine glycan is attached at T318. Residues 333–345 are compositionally biased toward low complexity; it reads ESELSPLSEAEVL. The segment covering 346–355 has biased composition (basic and acidic residues); the sequence is PEVRERRSPV. O-linked (GalNAc...) threonine glycosylation is present at T365. The span at 380-392 shows a compositional bias: low complexity; the sequence is ESELSPLSEAEVL. Residues 393–402 are compositionally biased toward basic and acidic residues; that stretch reads PEVRERRSPV. An O-linked (GalNAc...) threonine glycan is attached at T412. The segment covering 427-439 has biased composition (low complexity); the sequence is ESELSPLSEAEVL. The segment covering 440–449 has biased composition (basic and acidic residues); it reads PEVRERRSPV. Residue T459 is glycosylated (O-linked (GalNAc...) threonine). The segment covering 474 to 486 has biased composition (low complexity); that stretch reads ESELSPLSEAEVL. A compositionally biased stretch (basic and acidic residues) spans 487-496; it reads PEVRERRSPV. A glycan (O-linked (GalNAc...) threonine) is linked at T506. Low complexity predominate over residues 521–533; it reads ESELSPSSEAEVL. The span at 534-543 shows a compositional bias: basic and acidic residues; the sequence is PEVRERRSPV. T553 carries an O-linked (GalNAc...) threonine glycan. Over residues 568–580 the composition is skewed to low complexity; it reads ESELSPLSEAEVL. The span at 581 to 590 shows a compositional bias: basic and acidic residues; sequence PEVRERRSPV. T600 is a glycosylation site (O-linked (GalNAc...) threonine). Positions 615–627 are enriched in low complexity; the sequence is ESELSPLSEAEGL. A glycan (O-linked (GalNAc...) threonine) is linked at T647.

Its subcellular location is the secreted. In terms of biological role, has antibacterial activity in vitro. The chain is Probable antibacterial peptide polyprotein from Riptortus clavatus (Bean bug).